The chain runs to 178 residues: Crossover junction endodeoxyribonuclease RuvC (178 aa).

Residues Asp20, Glu80, and Asp154 contribute to the active site. Asp20, Glu80, and Asp154 together coordinate Mg(2+).

Belongs to the RuvC family. As to quaternary structure, homodimer which binds Holliday junction (HJ) DNA. The HJ becomes 2-fold symmetrical on binding to RuvC with unstacked arms; it has a different conformation from HJ DNA in complex with RuvA. In the full resolvosome a probable DNA-RuvA(4)-RuvB(12)-RuvC(2) complex forms which resolves the HJ. Mg(2+) serves as cofactor.

It localises to the cytoplasm. The catalysed reaction is Endonucleolytic cleavage at a junction such as a reciprocal single-stranded crossover between two homologous DNA duplexes (Holliday junction).. Its function is as follows. The RuvA-RuvB-RuvC complex processes Holliday junction (HJ) DNA during genetic recombination and DNA repair. Endonuclease that resolves HJ intermediates. Cleaves cruciform DNA by making single-stranded nicks across the HJ at symmetrical positions within the homologous arms, yielding a 5'-phosphate and a 3'-hydroxyl group; requires a central core of homology in the junction. The consensus cleavage sequence is 5'-(A/T)TT(C/G)-3'. Cleavage occurs on the 3'-side of the TT dinucleotide at the point of strand exchange. HJ branch migration catalyzed by RuvA-RuvB allows RuvC to scan DNA until it finds its consensus sequence, where it cleaves and resolves the cruciform DNA. The protein is Crossover junction endodeoxyribonuclease RuvC of Rhodopirellula baltica (strain DSM 10527 / NCIMB 13988 / SH1).